A 480-amino-acid polypeptide reads, in one-letter code: NADH-quinone oxidoreductase subunit N (480 aa).

13 helical membrane-spanning segments follow: residues 5–25 (NFLC…LFLY), 40–60 (IAIV…FTMY), 69–89 (ISSQ…FLVF), 110–130 (VIML…NFVM), 162–182 (YILT…FLYG), 204–224 (LGFV…PFHL), 237–257 (VTAY…IFVL), 266–286 (LIWN…GNLF), 296–316 (FFAF…IAGT), 324–344 (IFYT…IASV), 368–388 (AFVM…AGFF), 404–424 (ILVF…LLIV), and 450–470 (MVIC…YEYI).

This sequence belongs to the complex I subunit 2 family. As to quaternary structure, NDH-1 is composed of 14 different subunits. Subunits NuoA, H, J, K, L, M, N constitute the membrane sector of the complex.

It is found in the cell inner membrane. It carries out the reaction a quinone + NADH + 5 H(+)(in) = a quinol + NAD(+) + 4 H(+)(out). NDH-1 shuttles electrons from NADH, via FMN and iron-sulfur (Fe-S) centers, to quinones in the respiratory chain. The immediate electron acceptor for the enzyme in this species is believed to be a menaquinone. Couples the redox reaction to proton translocation (for every two electrons transferred, four hydrogen ions are translocated across the cytoplasmic membrane), and thus conserves the redox energy in a proton gradient. In Azobacteroides pseudotrichonymphae genomovar. CFP2, this protein is NADH-quinone oxidoreductase subunit N.